The chain runs to 117 residues: Large ribosomal subunit protein uL18 (117 aa).

The protein belongs to the universal ribosomal protein uL18 family. In terms of assembly, part of the 50S ribosomal subunit; part of the 5S rRNA/L5/L18/L25 subcomplex. Contacts the 5S and 23S rRNAs.

This is one of the proteins that bind and probably mediate the attachment of the 5S RNA into the large ribosomal subunit, where it forms part of the central protuberance. The protein is Large ribosomal subunit protein uL18 of Laribacter hongkongensis (strain HLHK9).